We begin with the raw amino-acid sequence, 610 residues long: Aspartate--tRNA(Asp/Asn) ligase (610 aa).

An L-aspartate-binding site is contributed by Glu182. The segment at 206–209 (QLFK) is aspartate. Position 228 (Arg228) interacts with L-aspartate. ATP is bound by residues 228-230 (RDE) and Gln237. Residue His470 participates in L-aspartate binding. Residue Glu506 participates in ATP binding. Arg513 is a binding site for L-aspartate. 558-561 (GLDR) contributes to the ATP binding site.

It belongs to the class-II aminoacyl-tRNA synthetase family. Type 1 subfamily. Homodimer.

The protein resides in the cytoplasm. It carries out the reaction tRNA(Asx) + L-aspartate + ATP = L-aspartyl-tRNA(Asx) + AMP + diphosphate. Functionally, aspartyl-tRNA synthetase with relaxed tRNA specificity since it is able to aspartylate not only its cognate tRNA(Asp) but also tRNA(Asn). Reaction proceeds in two steps: L-aspartate is first activated by ATP to form Asp-AMP and then transferred to the acceptor end of tRNA(Asp/Asn). This is Aspartate--tRNA(Asp/Asn) ligase from Acidobacterium capsulatum (strain ATCC 51196 / DSM 11244 / BCRC 80197 / JCM 7670 / NBRC 15755 / NCIMB 13165 / 161).